Here is a 523-residue protein sequence, read N- to C-terminus: Beta-glucosidase 31 (523 aa).

The first 22 residues, 1–22, serve as a signal peptide directing secretion; it reads MTPARVVFICCVVLLAAAAAAA. A beta-D-glucoside contacts are provided by residues Gln-49, His-149, and 194–195; that span reads NE. Glu-195 (proton donor) is an active-site residue. Residues Cys-214 and Cys-223 are joined by a disulfide bond. A glycan (N-linked (GlcNAc...) asparagine) is linked at Asn-227. Residues Tyr-339 and Glu-413 each contribute to the a beta-D-glucoside site. The active-site Nucleophile is Glu-413. N-linked (GlcNAc...) asparagine glycosylation occurs at Asn-450. Residues Trp-460, 467-468, and Phe-476 contribute to the a beta-D-glucoside site; that span reads EY.

Belongs to the glycosyl hydrolase 1 family.

It catalyses the reaction Hydrolysis of terminal, non-reducing beta-D-glucosyl residues with release of beta-D-glucose.. The chain is Beta-glucosidase 31 (BGLU31) from Oryza sativa subsp. japonica (Rice).